A 133-amino-acid chain; its full sequence is Small ribosomal subunit protein uS12c (133 aa).

This sequence belongs to the universal ribosomal protein uS12 family. In terms of assembly, part of the 30S ribosomal subunit.

The protein localises to the plastid. It localises to the chloroplast. Functionally, with S4 and S5 plays an important role in translational accuracy. Located at the interface of the 30S and 50S subunits. In Chlamydomonas reinhardtii (Chlamydomonas smithii), this protein is Small ribosomal subunit protein uS12c (rps12).